Consider the following 201-residue polypeptide: Large ribosomal subunit protein mL61 (201 aa).

The interval 87 to 118 (RDDKDAKPSSTPFPTSSADGSSPAPKPAQGER) is disordered. Positions 94 to 106 (PSSTPFPTSSADG) are enriched in polar residues.

This sequence belongs to the mitochondrion-specific ribosomal protein mL61 family. As to quaternary structure, component of the mitochondrial large ribosomal subunit (mt-LSU). Mature N.crassa 74S mitochondrial ribosomes consist of a small (37S) and a large (54S) subunit. The 37S small subunit contains a 16S ribosomal RNA (16S mt-rRNA) and 32 different proteins. The 54S large subunit contains a 23S rRNA (23S mt-rRNA) and 42 different proteins.

It is found in the mitochondrion. Its function is as follows. Component of the mitochondrial ribosome (mitoribosome), a dedicated translation machinery responsible for the synthesis of mitochondrial genome-encoded proteins, including at least some of the essential transmembrane subunits of the mitochondrial respiratory chain. The mitoribosomes are attached to the mitochondrial inner membrane and translation products are cotranslationally integrated into the membrane. In Neurospora crassa (strain ATCC 24698 / 74-OR23-1A / CBS 708.71 / DSM 1257 / FGSC 987), this protein is Large ribosomal subunit protein mL61 (mrp49).